The following is a 75-amino-acid chain: Exodeoxyribonuclease 7 small subunit (75 aa).

This sequence belongs to the XseB family. In terms of assembly, heterooligomer composed of large and small subunits.

It is found in the cytoplasm. The catalysed reaction is Exonucleolytic cleavage in either 5'- to 3'- or 3'- to 5'-direction to yield nucleoside 5'-phosphates.. Bidirectionally degrades single-stranded DNA into large acid-insoluble oligonucleotides, which are then degraded further into small acid-soluble oligonucleotides. This chain is Exodeoxyribonuclease 7 small subunit, found in Caldanaerobacter subterraneus subsp. tengcongensis (strain DSM 15242 / JCM 11007 / NBRC 100824 / MB4) (Thermoanaerobacter tengcongensis).